The primary structure comprises 204 residues: MKIVSTGIYYALALCAAAALVAWLAGPLFAIPLILVALFCLYFFRDPDREIPAGPVAVSPADGKVVAVKPEGGLSRLSIFLNVFDVHVNRTPIAGTIQKVQYKEGQFLVASREECSTDNEQNIVTVAGDGTTVIFKQIAGLIARRIVFTKRPGDHVALGERIGLIKFGSRMDVLFGPEWEITVRPGQRVSAGSSIIARRLDRKS.

Residue Ser169 is the Schiff-base intermediate with substrate; via pyruvic acid of the active site. Ser169 bears the Pyruvic acid (Ser); by autocatalysis mark.

This sequence belongs to the phosphatidylserine decarboxylase family. PSD-A subfamily. As to quaternary structure, heterodimer of a large membrane-associated beta subunit and a small pyruvoyl-containing alpha subunit. Pyruvate serves as cofactor. Is synthesized initially as an inactive proenzyme. Formation of the active enzyme involves a self-maturation process in which the active site pyruvoyl group is generated from an internal serine residue via an autocatalytic post-translational modification. Two non-identical subunits are generated from the proenzyme in this reaction, and the pyruvate is formed at the N-terminus of the alpha chain, which is derived from the carboxyl end of the proenzyme. The post-translation cleavage follows an unusual pathway, termed non-hydrolytic serinolysis, in which the side chain hydroxyl group of the serine supplies its oxygen atom to form the C-terminus of the beta chain, while the remainder of the serine residue undergoes an oxidative deamination to produce ammonia and the pyruvoyl prosthetic group on the alpha chain.

It localises to the cell membrane. It carries out the reaction a 1,2-diacyl-sn-glycero-3-phospho-L-serine + H(+) = a 1,2-diacyl-sn-glycero-3-phosphoethanolamine + CO2. It participates in phospholipid metabolism; phosphatidylethanolamine biosynthesis; phosphatidylethanolamine from CDP-diacylglycerol: step 2/2. Its function is as follows. Catalyzes the formation of phosphatidylethanolamine (PtdEtn) from phosphatidylserine (PtdSer). This is Phosphatidylserine decarboxylase proenzyme from Solibacter usitatus (strain Ellin6076).